Here is a 122-residue protein sequence, read N- to C-terminus: Large ribosomal subunit protein uL14c (122 aa).

Belongs to the universal ribosomal protein uL14 family. As to quaternary structure, part of the 50S ribosomal subunit.

The protein resides in the plastid. The protein localises to the chloroplast. Its function is as follows. Binds to 23S rRNA. This Populus alba (White poplar) protein is Large ribosomal subunit protein uL14c.